Consider the following 212-residue polypeptide: MNLLIIGLPGAGKGTQAAKIVEEFGVAHISTGDMFRAAMANQTEMGRLAKSYIDKGELVPDEVTNGIVKERLAEDDIAEKGFLLDGYPRTIEQAHALDATLEELGLRLDGVINIKVDPSCLVERLSGRIINRKTGETFHKVFNPPVDYKEEDYYQREDDKPETVKRRLDVNMAQGEPILEHYRKLGLVTDIEGNQEITDVFADVEKALLELK.

ATP is bound at residue 10–15 (GAGKGT). Positions 30 to 59 (STGDMFRAAMANQTEMGRLAKSYIDKGELV) are NMP. AMP-binding positions include Thr31, Arg36, 57–59 (ELV), 86–89 (GYPR), and Gln93. An LID region spans residues 127–159 (GRIINRKTGETFHKVFNPPVDYKEEDYYQREDD). ATP is bound by residues Arg128 and 137–138 (TF). AMP is bound by residues Arg156 and Arg167. Gln195 provides a ligand contact to ATP.

It belongs to the adenylate kinase family. As to quaternary structure, monomer.

The protein resides in the cytoplasm. It carries out the reaction AMP + ATP = 2 ADP. It participates in purine metabolism; AMP biosynthesis via salvage pathway; AMP from ADP: step 1/1. In terms of biological role, catalyzes the reversible transfer of the terminal phosphate group between ATP and AMP. Plays an important role in cellular energy homeostasis and in adenine nucleotide metabolism. The chain is Adenylate kinase from Streptococcus pyogenes serotype M12 (strain MGAS2096).